The following is a 267-amino-acid chain: Undecaprenyl-diphosphatase (267 aa).

8 helical membrane passes run 1-21 (MSYF…FLPI), 39-59 (QGLA…VLYF), 83-103 (AKLA…GFVM), 111-131 (LRSA…LWYV), 149-169 (ALFI…RSGA), 189-209 (FLMS…KLVT), 218-238 (FLLT…HFFL), and 245-265 (GMTP…AFLL).

Belongs to the UppP family.

It is found in the cell inner membrane. The catalysed reaction is di-trans,octa-cis-undecaprenyl diphosphate + H2O = di-trans,octa-cis-undecaprenyl phosphate + phosphate + H(+). In terms of biological role, catalyzes the dephosphorylation of undecaprenyl diphosphate (UPP). Confers resistance to bacitracin. This is Undecaprenyl-diphosphatase from Vibrio cholerae serotype O1 (strain ATCC 39315 / El Tor Inaba N16961).